We begin with the raw amino-acid sequence, 815 residues long: Protein SEY1 homolog (815 aa).

Residues 1–737 (MRQIIDYDCN…IQSTGRQPQN (737 aa)) lie on the Cytoplasmic side of the membrane. Residues 28 to 260 (TLGFNVISIL…LPKDYTRRIP (233 aa)) form the GB1/RHD3-type G domain. 38–45 (GCQSTGKS) provides a ligand contact to GTP. Residues 298–321 (AKDDILDGYKKSIKDLQKKMEKRE) are a coiled coil. A helical membrane pass occupies residues 738-758 (IPWWIYLLIIILGFDEITYVL). Residues 759–761 (TSP) lie on the Lumenal side of the membrane. Residues 762–782 (VLVTLLLLLASFIYSYLTGNF) traverse the membrane as a helical segment. Residues 783–815 (SSFCNYSQQFVIISTKILHYISGAIHSSLDNRK) are Cytoplasmic-facing.

The protein belongs to the TRAFAC class dynamin-like GTPase superfamily. GB1/RHD3 GTPase family. RHD3 subfamily.

The protein localises to the endoplasmic reticulum membrane. Probable GTP-binding protein that may be involved in cell development. The sequence is that of Protein SEY1 homolog from Cryptosporidium hominis.